The following is a 456-amino-acid chain: Equilibrative nucleoside transporter 1 (456 aa).

Over 2 to 12 (TTSHQPQDRYK) the chain is Cytoplasmic. A helical transmembrane segment spans residues 13–29 (AVWLIFFMLGLGTLLPW). Residues 30–82 (NFFMTATQYFTNRLDMSQNVSLVTAELSKDAQASAAPAAPLPERNSLSAIFNN) lie on the Extracellular side of the membrane. An N-linked (GlcNAc...) asparagine glycan is attached at N48. Residues 83–107 (VMTLCAMLPLLLFTYLNSFLHQRIP) form a helical membrane-spanning segment. At 108 to 111 (QSVR) the chain is on the cytoplasmic side. Residues 112–130 (ILGSLVAILLVFLITAILV) traverse the membrane as a helical segment. The Extracellular segment spans residues 131 to 138 (KVQLDALP). The chain crosses the membrane as a helical span at residues 139–157 (FFVITMIKIVLINSFGAIL). The Cytoplasmic segment spans residues 158–174 (QGSLFGLAGLLPASYTA). A helical membrane pass occupies residues 175–199 (PIMSGQGLAGFFASVAMICAIASGS). Over 200 to 206 (ELSESAF) the chain is Extracellular. Residues 207–227 (GYFITACAVIILTIICYLGLP) form a helical membrane-spanning segment. The Cytoplasmic portion of the chain corresponds to 228 to 291 (RLEFYRYYQQ…IKAILKNISV (64 aa)). 3 positions are modified to phosphoserine: S254, S269, and S273. Over residues 254–266 (SKGEEPRAGKEES) the composition is skewed to basic and acidic residues. The segment at 254–276 (SKGEEPRAGKEESGVSVSNSQPT) is disordered. The chain crosses the membrane as a helical span at residues 292–311 (LAFSVCFIFTITIGMFPAVT). Over 312-323 (VEVKSSIAGSST) the chain is Extracellular. A helical transmembrane segment spans residues 324–342 (WERYFIPVSCFLTFNIFDW). At 343–359 (LGRSLTAVFMWPGKDSR) the chain is on the cytoplasmic side. Residues 360–378 (WLPSLVLARLVFVPLLLLC) traverse the membrane as a helical segment. Residues 379 to 393 (NIKPRRYLTVVFEHD) lie on the Extracellular side of the membrane. A helical membrane pass occupies residues 394–413 (AWFIFFMAAFAFSNGYLASL). Residues 414 to 431 (CMCFGPKKVKPAEAETAG) lie on the Cytoplasmic side of the membrane. A helical transmembrane segment spans residues 432-452 (AIMAFFLCLGLALGAVFSFLF). The Extracellular portion of the chain corresponds to 453 to 456 (RAIV).

This sequence belongs to the SLC29A/ENT transporter (TC 2.A.57) family. In terms of assembly, identified in a complex with STOM. Post-translationally, glycosylated. As to expression, expressed in testis at the blood-testis barrier (at protein level). Detected in erythrocytes (at protein level). Expressed at relatively high levels in cerebral cortex, particularly the frontal and parietal lobes, and the thalamus and basal ganglia (at protein level). In the midbrain expressed at moderate levels, whereas in the other areas of the brainstem, namely medulla and pons, cerebellum and the hippocampus expressed at lower amounts when compared to the other brain regions (at protein level). Expressed in Langerhans cells and lymphocytes in the pancreas (at protein level). Expressed in kidney, in polarized renal epithelial cells. Expressed in adipose tissues. Expressed in placenta. Expressed in small intestine.

It is found in the basolateral cell membrane. The protein resides in the apical cell membrane. Its subcellular location is the cell membrane. It carries out the reaction adenosine(in) = adenosine(out). The catalysed reaction is guanosine(in) = guanosine(out). The enzyme catalyses inosine(in) = inosine(out). It catalyses the reaction uridine(out) = uridine(in). It carries out the reaction thymidine(in) = thymidine(out). The catalysed reaction is cytidine(in) = cytidine(out). The enzyme catalyses adenine(out) = adenine(in). It catalyses the reaction guanine(out) = guanine(in). It carries out the reaction thymine(out) = thymine(in). The catalysed reaction is uracil(in) = uracil(out). The enzyme catalyses hypoxanthine(out) = hypoxanthine(in). Its activity is regulated as follows. Transporter activity is sensitive to low concentrations of the inhibitor nitrobenzylmercaptopurine riboside (NBMPR). Inhibited by dilazep. Inhibited by dipyridamole. Inhibited by hypoxanthine. Inhibited by azidothymidine (AZT). Inhibited by dideoxycytidine (ddC). Inhibited by dideoxyinosine (ddI). Inhibited by draflazine. Inhibited by soluflazine. Inhibited by cladribine. Inhibited by capecitabine. Inhibited by clofarabine. Inhibited by ribavirin. Modestly inhibited by acyclovir. Modestly inhibited by 5-fluorouracil. Its function is as follows. Uniporter involved in the facilitative transport of nucleosides and nucleobases, and contributes to maintaining their cellular homeostasis. Functions as a Na(+)-independent transporter. Involved in the transport of nucleosides such as adenosine, guanosine, inosine, uridine, thymidine and cytidine. Also transports purine nucleobases (hypoxanthine, adenine, guanine) and pyrimidine nucleobases (thymine, uracil). Mediates basolateral nucleoside uptake into Sertoli cells, thereby regulating the transport of nucleosides in testis across the blood-testis barrier. Regulates inosine levels in brown adipocytes tissues (BAT) and extracellular inosine levels, which controls BAT-dependent energy expenditure. In Homo sapiens (Human), this protein is Equilibrative nucleoside transporter 1.